The chain runs to 82 residues: Small ribosomal subunit protein uS17 (82 aa).

It belongs to the universal ribosomal protein uS17 family. In terms of assembly, part of the 30S ribosomal subunit.

In terms of biological role, one of the primary rRNA binding proteins, it binds specifically to the 5'-end of 16S ribosomal RNA. In Phenylobacterium zucineum (strain HLK1), this protein is Small ribosomal subunit protein uS17.